The chain runs to 444 residues: Exodeoxyribonuclease 7 large subunit (444 aa).

This sequence belongs to the XseA family. Heterooligomer composed of large and small subunits.

Its subcellular location is the cytoplasm. The catalysed reaction is Exonucleolytic cleavage in either 5'- to 3'- or 3'- to 5'-direction to yield nucleoside 5'-phosphates.. Functionally, bidirectionally degrades single-stranded DNA into large acid-insoluble oligonucleotides, which are then degraded further into small acid-soluble oligonucleotides. This is Exodeoxyribonuclease 7 large subunit from Xylella fastidiosa (strain 9a5c).